A 68-amino-acid chain; its full sequence is Large ribosomal subunit protein uL30 (68 aa).

It belongs to the universal ribosomal protein uL30 family. As to quaternary structure, part of the 50S ribosomal subunit.

This is Large ribosomal subunit protein uL30 from Bartonella quintana (strain Toulouse) (Rochalimaea quintana).